The chain runs to 305 residues: Sulfate adenylyltransferase subunit 2 (305 aa).

Belongs to the PAPS reductase family. CysD subfamily. Heterodimer composed of CysD, the smaller subunit, and CysN.

It catalyses the reaction sulfate + ATP + H(+) = adenosine 5'-phosphosulfate + diphosphate. It functions in the pathway sulfur metabolism; hydrogen sulfide biosynthesis; sulfite from sulfate: step 1/3. With CysN forms the ATP sulfurylase (ATPS) that catalyzes the adenylation of sulfate producing adenosine 5'-phosphosulfate (APS) and diphosphate, the first enzymatic step in sulfur assimilation pathway. APS synthesis involves the formation of a high-energy phosphoric-sulfuric acid anhydride bond driven by GTP hydrolysis by CysN coupled to ATP hydrolysis by CysD. This is Sulfate adenylyltransferase subunit 2 from Azotobacter vinelandii (strain DJ / ATCC BAA-1303).